A 204-amino-acid chain; its full sequence is Cytochrome bo(3) ubiquinol oxidase subunit 3 (204 aa).

Topologically, residues 1–31 are cytoplasmic; sequence MATDTLTHATAHAHEHGHHDAGGTKIFGFWI. A helical transmembrane segment spans residues 32–50; sequence YLMSDCILFSILFATYAVL. The Periplasmic segment spans residues 51 to 66; sequence VNGTAGGPTGKDIFEL. The chain crosses the membrane as a helical span at residues 67–85; sequence PFVLVETFLLLFSSITYGM. The Cytoplasmic segment spans residues 86 to 101; the sequence is AAIAMYKNNKSQVISW. Residues 102 to 120 traverse the membrane as a helical segment; the sequence is LALTWLFGAGFIGMEIYEF. Over 121-142 the chain is Periplasmic; that stretch reads HHLIVNGMGPDRSGFLSAFFAL. Residues 143–161 form a helical membrane-spanning segment; the sequence is VGTHGLHVTSGLIWMAVLM. At 162-184 the chain is on the cytoplasmic side; it reads VQIARRGLTSTNRTRIMCLSLFW. The helical transmembrane segment at 185-203 threads the bilayer; sequence HFLDVVWICVFTVVYLMGA. A topological domain (periplasmic) is located at residue Met204.

This sequence belongs to the cytochrome c oxidase subunit 3 family. As to quaternary structure, heterooctamer of two A chains, two B chains, two C chains and two D chains.

It localises to the cell inner membrane. Its function is as follows. Cytochrome bo(3) ubiquinol terminal oxidase is the component of the aerobic respiratory chain of E.coli that predominates when cells are grown at high aeration. Has proton pump activity across the membrane in addition to electron transfer, pumping 2 protons/electron. The protein is Cytochrome bo(3) ubiquinol oxidase subunit 3 (cyoC) of Escherichia coli O6:H1 (strain CFT073 / ATCC 700928 / UPEC).